A 178-amino-acid polypeptide reads, in one-letter code: MEFKSILLDEKAIKRTLTRIAHEIIEKNKGVEDIVLLGIQRRGVPIARRIAALIEQFEDVKVEVGSVDITLYRDDLTEVAEQPLLNEKSLDIDVKNKKIILVDDVLFTGRTARAAMEAVIKHGRPDNIQLAVLVDRGHRELPIRADYVGKNVPTSKKELVSVMVSEIDSEDAVKIFEK.

Positions 99–111 match the PRPP-binding motif; the sequence is IILVDDVLFTGRT.

Belongs to the purine/pyrimidine phosphoribosyltransferase family. PyrR subfamily. Homodimer and homohexamer; in equilibrium.

The enzyme catalyses UMP + diphosphate = 5-phospho-alpha-D-ribose 1-diphosphate + uracil. In terms of biological role, regulates transcriptional attenuation of the pyrimidine nucleotide (pyr) operon by binding in a uridine-dependent manner to specific sites on pyr mRNA. This disrupts an antiterminator hairpin in the RNA and favors formation of a downstream transcription terminator, leading to a reduced expression of downstream genes. Its function is as follows. Also displays a weak uracil phosphoribosyltransferase activity which is not physiologically significant. This Clostridium novyi (strain NT) protein is Bifunctional protein PyrR.